Consider the following 238-residue polypeptide: Uridylate kinase (238 aa).

Position 12 to 15 (12 to 15 (KLSG)) interacts with ATP. Position 54 (G54) interacts with UMP. G55 and R59 together coordinate ATP. UMP contacts are provided by residues D74 and 135-142 (TGNPFFTT). 3 residues coordinate ATP: T162, Y168, and D171.

This sequence belongs to the UMP kinase family. As to quaternary structure, homohexamer.

The protein localises to the cytoplasm. It carries out the reaction UMP + ATP = UDP + ADP. It participates in pyrimidine metabolism; CTP biosynthesis via de novo pathway; UDP from UMP (UMPK route): step 1/1. Inhibited by UTP. Functionally, catalyzes the reversible phosphorylation of UMP to UDP. The protein is Uridylate kinase of Nitrosospira multiformis (strain ATCC 25196 / NCIMB 11849 / C 71).